The following is an 813-amino-acid chain: Lon protease (813 aa).

One can recognise a Lon N-terminal domain in the interval 14 to 207 (LPLLPLRGII…ILTEILAREM (194 aa)). Residue 359–366 (GPPGVGKT) participates in ATP binding. One can recognise a Lon proteolytic domain in the interval 595 to 776 (ESQVGVATGL…DQVIREALLE (182 aa)). Active-site residues include Ser682 and Lys725.

Belongs to the peptidase S16 family. In terms of assembly, homohexamer. Organized in a ring with a central cavity.

Its subcellular location is the cytoplasm. The enzyme catalyses Hydrolysis of proteins in presence of ATP.. Functionally, ATP-dependent serine protease that mediates the selective degradation of mutant and abnormal proteins as well as certain short-lived regulatory proteins. Required for cellular homeostasis and for survival from DNA damage and developmental changes induced by stress. Degrades polypeptides processively to yield small peptide fragments that are 5 to 10 amino acids long. Binds to DNA in a double-stranded, site-specific manner. The sequence is that of Lon protease from Heliobacterium modesticaldum (strain ATCC 51547 / Ice1).